We begin with the raw amino-acid sequence, 122 residues long: Double-headed protease inhibitor, submandibular gland (122 aa).

Kazal-like domains follow at residues 10 to 70 (GGRK…KCDI) and 71 to 121 (ECPQ…QCQS). 6 disulfides stabilise this stretch: C16/C50, C28/C47, C36/C68, C72/C101, C79/C98, and C87/C119.

Its subcellular location is the secreted. This inhibitor is composed of two homologous actively inhibiting halves: one which inhibits trypsin, the other which inhibits elastase. The polypeptide is Double-headed protease inhibitor, submandibular gland (Mustela lutreola (European mink)).